We begin with the raw amino-acid sequence, 540 residues long: Chaperonin GroEL 4 (540 aa).

ATP contacts are provided by residues 29–32 (TLGP), 86–90 (DGTTT), Gly413, 477–479 (NAA), and Asp493.

Belongs to the chaperonin (HSP60) family. Forms a cylinder of 14 subunits composed of two heptameric rings stacked back-to-back. Interacts with the co-chaperonin GroES.

The protein localises to the cytoplasm. The enzyme catalyses ATP + H2O + a folded polypeptide = ADP + phosphate + an unfolded polypeptide.. Its function is as follows. Together with its co-chaperonin GroES, plays an essential role in assisting protein folding. The GroEL-GroES system forms a nano-cage that allows encapsulation of the non-native substrate proteins and provides a physical environment optimized to promote and accelerate protein folding. The polypeptide is Chaperonin GroEL 4 (Frankia casuarinae (strain DSM 45818 / CECT 9043 / HFP020203 / CcI3)).